A 952-amino-acid polypeptide reads, in one-letter code: Leucine--tRNA ligase (952 aa).

The 'HIGH' region signature appears at 48-58 (PYLNGVLHAGH). The 'KMSKS' region signature appears at 644-648 (KLSKS). K647 is an ATP binding site.

This sequence belongs to the class-I aminoacyl-tRNA synthetase family.

The protein resides in the cytoplasm. The enzyme catalyses tRNA(Leu) + L-leucine + ATP = L-leucyl-tRNA(Leu) + AMP + diphosphate. This chain is Leucine--tRNA ligase, found in Methanococcus vannielii (strain ATCC 35089 / DSM 1224 / JCM 13029 / OCM 148 / SB).